The primary structure comprises 147 residues: MAAYTEDQLAEFQEAFNLFDNRGDGKIQLSQVGECLRALGQNPTESDVKKCTHQLKPDERISFEVFLPIYQAISKARSGDTADDFIEGLRHFDKDASGYISSAELRHLLTTLGEKLTDEEVEQLLANMEDQQGNINYEEFVRMVMSG.

EF-hand domains are found at residues 7–42, 80–115, and 115–147; these read DQLA…LGQN, DTAD…LGEK, and KLTD…VMSG. S30 bears the Phosphoserine mark. Residues D93, D95, S97, Y99, and E104 each coordinate Ca(2+).

As to quaternary structure, myosin is a hexamer of 2 heavy chains and 4 light chains.

This chain is Myosin-2 essential light chain (Mlc-c), found in Drosophila melanogaster (Fruit fly).